The sequence spans 472 residues: Chromosomal replication initiator protein DnaA (472 aa).

The segment at 1–80 is domain I, interacts with DnaA modulators; that stretch reads MDTKQIWFTT…YQVNVRVIIS (80 aa). The interval 80–130 is domain II; the sequence is SSATPAPSEPVAVTPSEPSPTTEVAEPSFASFNQAAPMLNQLPLGDPNRSS. Residues 131-347 are domain III, AAA+ region; that stretch reads VLNPRYTFSS…GCLNRVIAYA (217 aa). ATP contacts are provided by Gly175, Gly177, Lys178, and Thr179. Residues 348 to 472 are domain IV, binds dsDNA; the sequence is NLNRTPVTVE…RQRLYGENAR (125 aa).

The protein belongs to the DnaA family. In terms of assembly, oligomerizes as a right-handed, spiral filament on DNA at oriC.

The protein resides in the cytoplasm. Its function is as follows. Plays an essential role in the initiation and regulation of chromosomal replication. ATP-DnaA binds to the origin of replication (oriC) to initiate formation of the DNA replication initiation complex once per cell cycle. Binds the DnaA box (a 9 base pair repeat at the origin) and separates the double-stranded (ds)DNA. Forms a right-handed helical filament on oriC DNA; dsDNA binds to the exterior of the filament while single-stranded (ss)DNA is stabiized in the filament's interior. The ATP-DnaA-oriC complex binds and stabilizes one strand of the AT-rich DNA unwinding element (DUE), permitting loading of DNA polymerase. After initiation quickly degrades to an ADP-DnaA complex that is not apt for DNA replication. Binds acidic phospholipids. This is Chromosomal replication initiator protein DnaA from Herpetosiphon aurantiacus (strain ATCC 23779 / DSM 785 / 114-95).